The sequence spans 62 residues: UPF0291 protein CLJ_B2839 (62 aa).

Belongs to the UPF0291 family.

Its subcellular location is the cytoplasm. The protein is UPF0291 protein CLJ_B2839 of Clostridium botulinum (strain 657 / Type Ba4).